Reading from the N-terminus, the 632-residue chain is 2-hydroxyacyl-CoA lyase 2 (632 aa).

The chain crosses the membrane as a helical span at residues 10–30 (AWGFFSSFLLLAFGTLVAALL). Residue E98 participates in thiamine diphosphate binding. The segment at 470-550 (DFVGTAAYLV…VMALIGNDAG (81 aa)) is thiamine pyrophosphate binding. Positions 521 and 547 each coordinate Mg(2+).

It belongs to the TPP enzyme family. It depends on Mg(2+) as a cofactor. Thiamine diphosphate is required as a cofactor.

It localises to the endoplasmic reticulum membrane. The catalysed reaction is 2-hydroxyoctadecanoyl-CoA = heptadecanal + formyl-CoA. It catalyses the reaction (2R)-hydroxyhexadecanoyl-CoA = pentadecanal + formyl-CoA. Functionally, endoplasmic reticulum 2-OH acyl-CoA lyase involved in the cleavage (C1 removal) reaction in the fatty acid alpha-oxydation in a thiamine pyrophosphate (TPP)-dependent manner. Involved in the phytosphingosine degradation pathway. This chain is 2-hydroxyacyl-CoA lyase 2 (ILVBL), found in Bos taurus (Bovine).